The sequence spans 311 residues: tRNA-cytidine(32) 2-sulfurtransferase (311 aa).

Positions 47–52 match the PP-loop motif motif; sequence SGGKDS. [4Fe-4S] cluster contacts are provided by C122, C125, and C213.

It belongs to the TtcA family. Homodimer. It depends on Mg(2+) as a cofactor. [4Fe-4S] cluster is required as a cofactor.

It localises to the cytoplasm. The enzyme catalyses cytidine(32) in tRNA + S-sulfanyl-L-cysteinyl-[cysteine desulfurase] + AH2 + ATP = 2-thiocytidine(32) in tRNA + L-cysteinyl-[cysteine desulfurase] + A + AMP + diphosphate + H(+). It functions in the pathway tRNA modification. Catalyzes the ATP-dependent 2-thiolation of cytidine in position 32 of tRNA, to form 2-thiocytidine (s(2)C32). The sulfur atoms are provided by the cysteine/cysteine desulfurase (IscS) system. The protein is tRNA-cytidine(32) 2-sulfurtransferase of Escherichia coli (strain SMS-3-5 / SECEC).